The primary structure comprises 163 residues: Protein-export protein SecB (163 aa).

Belongs to the SecB family. Homotetramer, a dimer of dimers. One homotetramer interacts with 1 SecA dimer.

It is found in the cytoplasm. Its function is as follows. One of the proteins required for the normal export of preproteins out of the cell cytoplasm. It is a molecular chaperone that binds to a subset of precursor proteins, maintaining them in a translocation-competent state. It also specifically binds to its receptor SecA. The polypeptide is Protein-export protein SecB (Shewanella woodyi (strain ATCC 51908 / MS32)).